The chain runs to 541 residues: Copper transport protein CutJ (541 aa).

Residues 1–25 (MKRNRWWIILLLFLVFLPKTSFAHA) form the signal peptide. Cu cation is bound by residues H24 and H110. 8 helical membrane passes run 146-166 (AILY…LFWY), 180-200 (ILTG…PIQT), 228-248 (SIWI…IPAI), 262-282 (PLIF…AAVV), 293-313 (FLHL…VLLL), 335-355 (WALT…FFII), 370-390 (LLVK…HFLL), and 407-427 (WAIG…PSPP).

The protein in the N-terminal section; belongs to the CopC family. This sequence in the C-terminal section; belongs to the CopD family.

It is found in the cell membrane. In terms of biological role, involved in uptake of extracellular oxidized copper under copper-limiting conditions. The polypeptide is Copper transport protein CutJ (Bacillus subtilis (strain 168)).